The following is a 41-amino-acid chain: Disintegrin obtustatin (41 aa).

4 disulfide bridges follow: Cys1–Cys10, Cys6–Cys29, Cys7–Cys34, and Cys19–Cys36. Residues 1–41 (CTTGPCCRQCKLKPAGTTCWKTSLTSHYCTGKSCDCPLYPG) enclose the Disintegrin domain. The short motif at 21–23 (KTS) is the Cell attachment site; atypical (KTS) element.

It belongs to the disintegrin family. Short disintegrin subfamily. As to quaternary structure, monomer. As to expression, expressed by the venom gland.

The protein localises to the secreted. In terms of biological role, is a potent and selective inhibitor of alpha-1/beta-1 (ITGA1/ITGB1) integrin. It blocks the adhesion of alpha-1/beta-1-expressing K562 cells to immobilized collagens IV and I with IC(50) of 2 and 0.5 nM, respectively. Potently inhibits angiogenesis in chicken and in mouse model and reduces tumor development by half. Is 25-fold less potent than viperistatin. The protein is Disintegrin obtustatin of Macrovipera lebetina obtusa (Levant blunt-nosed viper).